The following is a 438-amino-acid chain: Dihydroorotase (438 aa).

Zn(2+) is bound by residues His58 and His60. Substrate contacts are provided by residues 60-62 (HLR) and Asn92. 3 residues coordinate Zn(2+): Asp152, His179, and His232. A substrate-binding site is contributed by Asn278. Asp305 contacts Zn(2+). The active site involves Asp305. Residues His309 and 323–324 (FG) each bind substrate.

The protein belongs to the metallo-dependent hydrolases superfamily. DHOase family. Class I DHOase subfamily. The cofactor is Zn(2+).

It carries out the reaction (S)-dihydroorotate + H2O = N-carbamoyl-L-aspartate + H(+). Its pathway is pyrimidine metabolism; UMP biosynthesis via de novo pathway; (S)-dihydroorotate from bicarbonate: step 3/3. Functionally, catalyzes the reversible cyclization of carbamoyl aspartate to dihydroorotate. The sequence is that of Dihydroorotase from Leifsonia xyli subsp. xyli (strain CTCB07).